A 62-amino-acid polypeptide reads, in one-letter code: Photosystem II reaction center protein Z (62 aa).

A run of 2 helical transmembrane segments spans residues 8-28 and 41-61; these read ALIS…VAYA and WLGS…NFFV.

The protein belongs to the PsbZ family. As to quaternary structure, PSII is composed of 1 copy each of membrane proteins PsbA, PsbB, PsbC, PsbD, PsbE, PsbF, PsbH, PsbI, PsbJ, PsbK, PsbL, PsbM, PsbT, PsbX, PsbY, PsbZ, Psb30/Ycf12, peripheral proteins PsbO, CyanoQ (PsbQ), PsbU, PsbV and a large number of cofactors. It forms dimeric complexes.

It localises to the cellular thylakoid membrane. In terms of biological role, may control the interaction of photosystem II (PSII) cores with the light-harvesting antenna, regulates electron flow through the 2 photosystem reaction centers. PSII is a light-driven water plastoquinone oxidoreductase, using light energy to abstract electrons from H(2)O, generating a proton gradient subsequently used for ATP formation. The sequence is that of Photosystem II reaction center protein Z from Trichormus variabilis (strain ATCC 29413 / PCC 7937) (Anabaena variabilis).